The sequence spans 311 residues: tRNA dimethylallyltransferase (311 aa).

10-17 (GPTAVGKS) is a binding site for ATP. 12 to 17 (TAVGKS) serves as a coordination point for substrate. The segment at 35 to 38 (DSMQ) is interaction with substrate tRNA.

It belongs to the IPP transferase family. In terms of assembly, monomer. Requires Mg(2+) as cofactor.

The enzyme catalyses adenosine(37) in tRNA + dimethylallyl diphosphate = N(6)-dimethylallyladenosine(37) in tRNA + diphosphate. In terms of biological role, catalyzes the transfer of a dimethylallyl group onto the adenine at position 37 in tRNAs that read codons beginning with uridine, leading to the formation of N6-(dimethylallyl)adenosine (i(6)A). The chain is tRNA dimethylallyltransferase from Carboxydothermus hydrogenoformans (strain ATCC BAA-161 / DSM 6008 / Z-2901).